The primary structure comprises 348 residues: MTQFNPVDHPHRRYNPLTGQWILVSPHRAKRPWQGAQETPAKQVLPAHDPDCFLCAGNVRVTGDKNPDYTGTYVFTNDFAALMSDTPDAPESHDPLMRCQSARGTSRVICFSPDHSKTLPELSVAALTEIVKTWQEQTAELGKTYPWVQVFENKGAAMGCSNPHPHGQIWANSFLPNEAEREDRLQKEYFAEQKSPMLVDYVQRELADGSRTVVETEHWLAVVPYWAAWPFETLLLPKAHVLRITDLTDAQRSDLALALKKLTSRYDNLFQCSFPYSMGWHGAPFNGEENQHWQLHAHFYPPLLRSATVRKFMVGYEMLAETQRDLTAEQAAERLRAVSDIHFRESGV.

Position 28 to 31 (28 to 31) interacts with UDP-alpha-D-glucose; it reads RAKR. Zn(2+) is bound by residues Cys52 and Cys55. UDP-alpha-D-glucose is bound by residues Val61 and 77–78; that span reads ND. His115 lines the Zn(2+) pocket. UDP-alpha-D-glucose contacts are provided by residues Asn153 and 159–161; that span reads GCS. His164 is a Zn(2+) binding site. The active-site Tele-UMP-histidine intermediate is His166. Gln168 is a binding site for UDP-alpha-D-glucose. Residues Glu182, His281, His296, and His298 each coordinate Fe cation. UDP-alpha-D-glucose is bound by residues 311 to 312, 316 to 317, and Gln323; these read KF and YE.

Belongs to the galactose-1-phosphate uridylyltransferase type 1 family. As to quaternary structure, homodimer. It depends on Zn(2+) as a cofactor.

The catalysed reaction is alpha-D-galactose 1-phosphate + UDP-alpha-D-glucose = alpha-D-glucose 1-phosphate + UDP-alpha-D-galactose. The protein operates within carbohydrate metabolism; galactose metabolism. This is Galactose-1-phosphate uridylyltransferase (galT) from Escherichia coli (strain K12).